A 573-amino-acid polypeptide reads, in one-letter code: Delta 8-(E)-sphingolipid desaturase (573 aa).

Residues 2–77 (SRVLSRRDIA…FKIWKIGRID (76 aa)) form the Cytochrome b5 heme-binding domain. Residues histidine 37 and histidine 60 each contribute to the heme site. Residues 228 to 248 (LFGISFYLLSLKWFAISAICL) traverse the membrane as a helical segment. Positions 260–264 (HDAGH) match the Histidine box-1 motif. A helical transmembrane segment spans residues 273–293 (VDNIIGMTVASWIGGLSLGWW). Positions 297–301 (HNVHH) match the Histidine box-2 motif. Transmembrane regions (helical) follow at residues 353–372 (YLYYPILCFGRFNLYRLSWM), 393–413 (LAGLSFFNYWFFYLIIYKQMP), and 422–442 (VMISHIATMIVHVQITLSHFA). The short motif at 481 to 485 (QVIHH) is the Histidine box-3 element.

It belongs to the fatty acid desaturase type 1 family.

It localises to the membrane. The enzyme catalyses an N-acylsphing-4-enine + 2 Fe(II)-[cytochrome b5] + O2 + 2 H(+) = a (4E,8E)-4-sphinga-4,8-dienine ceramide + 2 Fe(III)-[cytochrome b5] + 2 H2O. It functions in the pathway lipid metabolism; sphingolipid metabolism. In terms of biological role, delta(8)-fatty-acid desaturase which introduces a double bond at the 8-position in the long-chain base (LCB) of ceramides. Required for the formation of the di-unsaturated sphingoid base (E,E)-sphinga-4,8-dienine during glucosylceramide (GluCer) biosynthesis. The sequence is that of Delta 8-(E)-sphingolipid desaturase from Kluyveromyces lactis (strain ATCC 8585 / CBS 2359 / DSM 70799 / NBRC 1267 / NRRL Y-1140 / WM37) (Yeast).